The primary structure comprises 882 residues: Nitrogen regulatory protein areA (882 aa).

Gly residues predominate over residues 1–13 (MSGLTLGGGGSGG). 7 disordered regions span residues 1–75 (MSGL…PDSL), 139–191 (KRKE…LTSD), 228–257 (SRKD…SEFG), 325–344 (NNHS…FGLD), 394–422 (STDF…EHSM), 461–545 (NQDQ…DMNG), and 579–675 (MDTP…GPTT). Over residues 48–59 (SDFSQLSDDFSF) the composition is skewed to low complexity. Polar residues-rich tracts occupy residues 156-169 (NSVS…QLTS) and 177-191 (PTRQ…LTSD). Over residues 325–334 (NNHSSSHHNH) the composition is skewed to basic residues. Composition is skewed to polar residues over residues 394–413 (STDF…STPQ) and 492–503 (QVLNPNDFSTGA). A compositionally biased stretch (basic and acidic residues) spans 604-613 (VRNREQDPRR). Residues 617–642 (ARTTSTPNTAQLLRQSMNANTSHTSP) are compositionally biased toward polar residues. The GATA-type zinc finger occupies 676–700 (CTNCFTQTTPLWRRNPEGQPLCNAC). The segment at 723–871 (RNRSSANSLA…NHSIAGGQGA (149 aa)) is disordered. Positions 745–759 (KNSVQQTTVTTPTSS) are enriched in low complexity. Positions 795–811 (NPTTSSPGQSRGTSSVQ) are enriched in polar residues. Over residues 848 to 861 (ALAPAMPPAAANPA) the composition is skewed to low complexity.

It localises to the nucleus. In terms of biological role, major nitrogen regulatory protein. Positively acting regulatory gene of nitrogen metabolite repression. In Aspergillus niger, this protein is Nitrogen regulatory protein areA (areA).